A 1207-amino-acid chain; its full sequence is Systemin receptor SR160 (1207 aa).

Residues 1-34 (MKAHKTVFNQHPLSLNKLFFVLLLIFFLPPASPA) form the signal peptide. A Cys pair 1 motif is present at residues 71-78 (CSFTGVSC). 20 LRR repeats span residues 109–131 (NLESLVLKNANLSGSLTSAAKSQ), 135–157 (TLDSIDLAENTISGPISDISSFG), 161–181 (NLKSLNLSKNFLDPPGKEMLK), 186–207 (SLQVLDLSYNNISGFNLFPWVS), 213–234 (ELEFFSIKGNKLAGSIPELDFK), 235–257 (NLSYLDLSANNFSTVFPSFKDCS), 258–280 (NLQHLDLSSNKFYGDIGSSLSSC), 282–304 (KLSFLNLTNNQFVGLVPKLPSES), 305–325 (LQYLYLRGNDFQGVYPNQLAD), 329–350 (TVVELDLSYNNFSGMVPESLGE), 353–375 (SLELVDISNNNFSGKLPVDTLLK), 378–401 (NIKTMVLSFNKFVGGLPDSFSNLP), 402–423 (KLETLDMSSNNLTGIIPSGICK), 428–450 (NLKVLYLQNNLFKGPIPDSLSNC), 452–474 (QLVSLDLSFNYLTGSIPSSLGSL), 476–499 (KLKDLILWLNQLSGEIPQELMYLQ), 500–523 (ALENLILDFNDLTGPIPASLSNCT), 524–547 (KLNWISLSNNQLSGEIPASLGRLS), 548–570 (NLAILKLGNNSISGNIPAELGNC), and 572–594 (SLIWLDLNTNFLNGSIPPPLFKQ). Asn119 carries N-linked (GlcNAc...) asparagine glycosylation. N-linked (GlcNAc...) asparagine glycans are attached at residues Asn166 and Asn196. N-linked (GlcNAc...) asparagine glycosylation is found at Asn235 and Asn245. Asn287 carries an N-linked (GlcNAc...) asparagine glycan. N-linked (GlcNAc...) asparagine glycosylation is found at Asn339 and Asn363. N-linked (GlcNAc...) asparagine glycans are attached at residues Asn412 and Asn449. An N-linked (GlcNAc...) asparagine glycan is attached at Asn521. N-linked (GlcNAc...) asparagine glycans are attached at residues Asn556, Asn584, Asn646, and Asn662. LRR repeat units lie at residues 664 to 686 (SMIFLDLSYNKLEGSIPKELGAM), 688 to 711 (YLSILNLGHNDLSGMIPQQLGGLK), 712 to 735 (NVAILDLSYNRFNGTIPNSLTSLT), and 736 to 758 (LLGEIDLSNNNLSGMIPESAPFD). N-linked (GlcNAc...) asparagine glycans are attached at residues Asn724, Asn746, and Asn767. The short motif at 771-779 (CGYPLPLPC) is the Cys pair 2 element. The helical transmembrane segment at 803-823 (SVAMGLLFSLFCIFGLIIVAI) threads the bilayer. In terms of domain architecture, Protein kinase spans 888-1163 (FHNDSLVGSG…IQVMAMFKEI (276 aa)). Residues 894-902 (VGSGGFGDV) and Lys916 contribute to the ATP site. The active-site Proton acceptor is the Asp1014.

It belongs to the protein kinase superfamily. Ser/Thr protein kinase family. Post-translationally, glycosylated.

The protein localises to the cell membrane. The enzyme catalyses L-seryl-[protein] + ATP = O-phospho-L-seryl-[protein] + ADP + H(+). It catalyses the reaction L-threonyl-[protein] + ATP = O-phospho-L-threonyl-[protein] + ADP + H(+). In terms of biological role, receptor with a serine/threonine-protein kinase activity. Involved in the perception of systemin, a peptide hormone responsible for the systemic activation of defense genes in leaves of wounded plants. May also regulate, in response to brassinosteroid binding, a signaling cascade involved in plant development. The protein is Systemin receptor SR160 of Solanum peruvianum (Peruvian tomato).